The sequence spans 613 residues: Coiled-coil domain-containing protein 116 (613 aa).

The tract at residues 41–68 is disordered; that stretch reads KPGRVPHPPSTCGSSALQGQRRNKRHPQ. Residues 51–60 are compositionally biased toward polar residues; the sequence is TCGSSALQGQ. A coiled-coil region spans residues 79 to 104; that stretch reads ESQVLDSLETVVEKATERMAAMKTEA. Disordered regions lie at residues 329–395, 509–541, and 565–613; these read CRDG…AQVA, RQAS…QATE, and MSAC…EDGV. Phosphoserine is present on Ser386. The span at 512-539 shows a compositional bias: polar residues; it reads SRLSTSHCSTETPSVQQEPATHTAQDQA. Residues 577 to 589 are compositionally biased toward basic and acidic residues; it reads KSKDMDNEGRDKA. Positions 590–613 are enriched in acidic residues; that stretch reads EIEDEDEDEFKDEDQDEDKDEDGV.

The protein resides in the cytoplasm. It is found in the cytoskeleton. It localises to the microtubule organizing center. The protein localises to the centrosome. This Homo sapiens (Human) protein is Coiled-coil domain-containing protein 116 (CCDC116).